Here is a 1252-residue protein sequence, read N- to C-terminus: Protein ITPRID2 (1252 aa).

Residues Cys28–Asn70 form a disordered region. Residues Glu36–Leu57 are compositionally biased toward acidic residues. Thr85 carries the post-translational modification Phosphothreonine. Phosphoserine is present on residues Ser90, Ser109, Ser207, Ser268, and Ser328. 3 disordered regions span residues Asp306–Ala483, His552–Gln575, and Phe595–Pro636. Over residues Thr357–Ser372 the composition is skewed to low complexity. 2 stretches are compositionally biased toward basic and acidic residues: residues Ser395 to Arg407 and Asp415 to Leu428. The span at Glu429–Ser441 shows a compositional bias: low complexity. Ser465 is modified (phosphoserine). Phosphoserine occurs at positions 643, 667, 736, 738, 745, 758, and 766. Residue Lys807 forms a Glycyl lysine isopeptide (Lys-Gly) (interchain with G-Cter in SUMO2) linkage. Residues Ser866 and Ser898 each carry the phosphoserine modification. The stretch at Gln955 to Ala1031 forms a coiled coil. Ser1036, Ser1051, Ser1056, Ser1059, and Ser1114 each carry phosphoserine. Disordered stretches follow at residues Gly1095–Pro1131 and Ala1147–Val1180. Over residues Ser1103 to Ser1117 the composition is skewed to low complexity. At Thr1149 the chain carries Phosphothreonine. A compositionally biased stretch (polar residues) spans Thr1151–Thr1161. Residue Ser1154 is modified to Phosphoserine. The residue at position 1161 (Thr1161) is a Phosphothreonine.

Its subcellular location is the cytoplasm. This chain is Protein ITPRID2 (Itprid2), found in Mus musculus (Mouse).